We begin with the raw amino-acid sequence, 1383 residues long: DNA-directed RNA polymerase subunit beta (1383 aa).

Belongs to the RNA polymerase beta chain family. As to quaternary structure, the RNAP catalytic core consists of 2 alpha, 1 beta, 1 beta' and 1 omega subunit. When a sigma factor is associated with the core the holoenzyme is formed, which can initiate transcription.

It carries out the reaction RNA(n) + a ribonucleoside 5'-triphosphate = RNA(n+1) + diphosphate. Functionally, DNA-dependent RNA polymerase catalyzes the transcription of DNA into RNA using the four ribonucleoside triphosphates as substrates. In Bartonella quintana (strain Toulouse) (Rochalimaea quintana), this protein is DNA-directed RNA polymerase subunit beta.